We begin with the raw amino-acid sequence, 547 residues long: Delta-guaiene synthase 1 (547 aa).

Mg(2+) is bound by residues D299, D303, and D444. The short motif at 299-303 (DDTYD) is the DDXXD motif element.

The protein belongs to the terpene synthase family. It depends on Mg(2+) as a cofactor.

It catalyses the reaction (2E,6E)-farnesyl diphosphate = delta-guaiene + diphosphate. The enzyme catalyses (2E,6E)-farnesyl diphosphate = alpha-guaiene + diphosphate. It participates in secondary metabolite biosynthesis; terpenoid biosynthesis. In terms of biological role, sesquiterpene synthase involved in the biosynthesis of delta-guaiene (81.2%) and alpha-guaiene (18.1%), two structures composed of five- and seven-membered rings. Also produces 0.7% of alpha-humulene. This Aquilaria crassna (Eagle wood) protein is Delta-guaiene synthase 1 (C2).